A 386-amino-acid chain; its full sequence is 11-beta-hydroxysteroid dehydrogenase type 2 (386 aa).

An NAD(+)-binding site is contributed by Thr82–Ala111. Ser219 contacts substrate. Tyr232 (proton acceptor) is an active-site residue.

It belongs to the short-chain dehydrogenases/reductases (SDR) family. As to quaternary structure, interacts with ligand-free cytoplasmic NR3C2. As to expression, highly expressed in kidney. Also found in colon and small intestine. Not expressed in the adrenal gland. Expressed in uterus.

It localises to the microsome. The protein resides in the endoplasmic reticulum. It carries out the reaction an 11beta-hydroxysteroid + NAD(+) = an 11-oxosteroid + NADH + H(+). The enzyme catalyses corticosterone + NAD(+) = 11-dehydrocorticosterone + NADH + H(+). It catalyses the reaction 11beta,17beta-dihydroxyandrost-4-ene-3-one + NAD(+) = 17beta-hydroxyandrost-4-ene-3,11-dione + NADH + H(+). The catalysed reaction is 11beta-hydroxyandrost-4-ene-3,17-dione + NAD(+) = androst-4-ene-3,11,17-trione + NADH + H(+). The protein operates within steroid metabolism. Inhibited by glycyrrhetinic acid. Induced by progesterone, through the Ihh signaling pathway. In terms of biological role, catalyzes the conversion of biologically active 11beta-hydroxyglucocorticoids (11beta-hydroxysteroid) such as corticosterone, to inactive 11-ketoglucocorticoids (11-oxosteroid) such as 11-dehydrocorticosterone, in the presence of NAD(+). Functions as a dehydrogenase (oxidase), thereby decreasing the concentration of active glucocorticoids, thus protecting the nonselective mineralocorticoid receptor from occupation by glucocorticoids. Plays an important role in maintaining glucocorticoids balance during preimplantation and protects the fetus from excessive maternal corticosterone exposure. Catalyzes the oxidation of 11beta-hydroxytestosterone (11beta,17beta-dihydroxyandrost-4-ene-3-one) to 11-ketotestosterone (17beta-hydroxyandrost-4-ene-3,11-dione), a major bioactive androgen. Catalyzes the conversion of 11beta-hydroxyandrostenedione (11beta-hydroxyandrost-4-ene-3,17-dione) to 11-ketoandrostenedione (androst-4-ene-3,11,17-trione), which can be further metabolized to 11-ketotestosterone. Converts 7-beta-25-dihydroxycholesterol to 7-oxo-25-hydroxycholesterol in vitro. 7-beta-25-dihydroxycholesterol (not 7-oxo-25-hydroxycholesterol) acts as a ligand for the G-protein-coupled receptor (GPCR) Epstein-Barr virus-induced gene 2 (EBI2) and may thereby regulate immune cell migration. The chain is 11-beta-hydroxysteroid dehydrogenase type 2 (Hsd11b2) from Mus musculus (Mouse).